The primary structure comprises 68 residues: Large ribosomal subunit protein bL35 (68 aa).

The tract at residues 29–68 (GGVSHYNTKKSSKRKRQGRKPQYVPKNLEHKVKALLPNDV) is disordered. Over residues 35-47 (NTKKSSKRKRQGR) the composition is skewed to basic residues.

This sequence belongs to the bacterial ribosomal protein bL35 family.

The protein is Large ribosomal subunit protein bL35 of Sulfurihydrogenibium sp. (strain YO3AOP1).